A 302-amino-acid chain; its full sequence is Cobalt-precorrin-6A reductase (302 aa).

The segment covering 1-10 has biased composition (basic and acidic residues); that stretch reads MQTPEIKEGT. The segment at 1-37 is disordered; sequence MQTPEIKEGTEQYLWRRKTMNPGDKGVKRKGSDRQRE.

The protein belongs to the precorrin-6x reductase family.

The enzyme catalyses Co-precorrin-6B + NAD(+) = Co-precorrin-6A + NADH + H(+). Its pathway is cofactor biosynthesis; adenosylcobalamin biosynthesis; cob(II)yrinate a,c-diamide from sirohydrochlorin (anaerobic route): step 7/10. In terms of biological role, catalyzes the reduction of the macrocycle of cobalt-precorrin-6A to cobalt-precorrin-6B. This Methanothermobacter thermautotrophicus (strain ATCC 29096 / DSM 1053 / JCM 10044 / NBRC 100330 / Delta H) (Methanobacterium thermoautotrophicum) protein is Cobalt-precorrin-6A reductase (cbiJ).